A 534-amino-acid polypeptide reads, in one-letter code: Arginine--tRNA ligase (534 aa).

A 'HIGH' region motif is present at residues A120–H130.

This sequence belongs to the class-I aminoacyl-tRNA synthetase family. In terms of assembly, monomer.

It localises to the cytoplasm. It catalyses the reaction tRNA(Arg) + L-arginine + ATP = L-arginyl-tRNA(Arg) + AMP + diphosphate. The sequence is that of Arginine--tRNA ligase from Mesomycoplasma hyopneumoniae (strain 7448) (Mycoplasma hyopneumoniae).